The chain runs to 557 residues: MSLIKKKNKDIRIIPLGGVGEIAKNMYIVEVDDEMFMLDAGLMFPEDEMLGVDIVIPDIQYVIENKERLKGIFLTHGHEHAIGAVSYVLEQIDAPVYGSKLTIALVKEAMKARNIKKKVRYYTVNHDSIMRFKNVNVSFFNTTHSIPDSLGVCIHTSYGSIVYTGEFKFDQSLHGHYAPDLKRMAEIGDEGVFALISDSTEAEKPGYNTPENIIEHHMYDAFAKVKGRLIVSCYASNFVRIQQVLNIASQLNRKVSFLGRSLESSFNIARKMGYFDIPKDLLIPINEVENYPKNEVIIIATGMQGEPVEALSQMARKKHKIMNIEEGDSIFLAITASANMEVIIADTLNELVRAGAHIIPNNKKIHASSHGCMEELKMMLNIMKPEYFVPVQGEFKMQIAHAKLAAETGVAPEKIFLVEKGDVISYNGKDMILNEKVQSGNILIDGIGVGDVGNIVLRDRHLLAEDGIFIAVVTLDPKNRRIAAGPEIQSRGFVYVRESEELLKEAEEKVRKIVEEGLQEKRIEWSEIKQNMRDQISKLLFESTKRRPMIIPVISEI.

H76, H78, H144, and E166 together coordinate Zn(2+). 366–370 (HASSH) contributes to the substrate binding site.

The protein belongs to the metallo-beta-lactamase superfamily. RNA-metabolizing metallo-beta-lactamase-like family. Bacterial RNase J subfamily. In terms of assembly, homodimer, may be a subunit of the RNA degradosome. Requires Zn(2+) as cofactor.

Its subcellular location is the cytoplasm. In terms of biological role, an RNase that has 5'-3' exonuclease and possibly endoonuclease activity. Involved in maturation of rRNA and in some organisms also mRNA maturation and/or decay. In Staphylococcus epidermidis (strain ATCC 35984 / DSM 28319 / BCRC 17069 / CCUG 31568 / BM 3577 / RP62A), this protein is Ribonuclease J 2.